The chain runs to 555 residues: Glutamine--tRNA ligase (555 aa).

The short motif at 34–44 (PEPNGYLHIGH) is the 'HIGH' region element. Residues 35 to 37 (EPN) and 41 to 47 (HIGHAKS) each bind ATP. 2 residues coordinate L-glutamine: Asp67 and Tyr212. Residues Thr231, 261 to 262 (RL), and 269 to 271 (MSK) contribute to the ATP site. The 'KMSKS' region motif lies at 268 to 272 (VMSKR).

Belongs to the class-I aminoacyl-tRNA synthetase family. Monomer.

Its subcellular location is the cytoplasm. The catalysed reaction is tRNA(Gln) + L-glutamine + ATP = L-glutaminyl-tRNA(Gln) + AMP + diphosphate. The protein is Glutamine--tRNA ligase of Proteus mirabilis (strain HI4320).